The primary structure comprises 122 residues: Ribosomal protein eL22-like (122 aa).

Phosphoserine is present on residues serine 112, serine 118, and serine 120.

It belongs to the eukaryotic ribosomal protein eL22 family.

In Bos taurus (Bovine), this protein is Ribosomal protein eL22-like (RPL22L1).